The sequence spans 156 residues: ATP synthase subunit b (156 aa).

A helical transmembrane segment spans residues Leu7–Pro27.

Belongs to the ATPase B chain family. In terms of assembly, F-type ATPases have 2 components, F(1) - the catalytic core - and F(0) - the membrane proton channel. F(1) has five subunits: alpha(3), beta(3), gamma(1), delta(1), epsilon(1). F(0) has three main subunits: a(1), b(2) and c(10-14). The alpha and beta chains form an alternating ring which encloses part of the gamma chain. F(1) is attached to F(0) by a central stalk formed by the gamma and epsilon chains, while a peripheral stalk is formed by the delta and b chains.

It is found in the cell membrane. Its function is as follows. F(1)F(0) ATP synthase produces ATP from ADP in the presence of a proton or sodium gradient. F-type ATPases consist of two structural domains, F(1) containing the extramembraneous catalytic core and F(0) containing the membrane proton channel, linked together by a central stalk and a peripheral stalk. During catalysis, ATP synthesis in the catalytic domain of F(1) is coupled via a rotary mechanism of the central stalk subunits to proton translocation. Functionally, component of the F(0) channel, it forms part of the peripheral stalk, linking F(1) to F(0). This chain is ATP synthase subunit b, found in Polynucleobacter asymbioticus (strain DSM 18221 / CIP 109841 / QLW-P1DMWA-1) (Polynucleobacter necessarius subsp. asymbioticus).